The chain runs to 421 residues: Extracellular signal-regulated kinase 1 (421 aa).

In terms of domain architecture, Protein kinase spans Tyr-70 to Leu-375. ATP-binding positions include Val-76–Val-84 and Lys-99. The Proton acceptor role is filled by Asp-194. Thr-230 is modified (phosphothreonine). The short motif at Thr-230 to Tyr-232 is the TXY element. Residue Tyr-232 is modified to Phosphotyrosine.

The protein belongs to the protein kinase superfamily. CMGC Ser/Thr protein kinase family. MAP kinase subfamily. It depends on Mg(2+) as a cofactor. Dually phosphorylated on Thr-230 and Tyr-232, which activates the enzyme.

The enzyme catalyses L-seryl-[protein] + ATP = O-phospho-L-seryl-[protein] + ADP + H(+). It catalyses the reaction L-threonyl-[protein] + ATP = O-phospho-L-threonyl-[protein] + ADP + H(+). Activated by tyrosine and threonine phosphorylation. This is Extracellular signal-regulated kinase 1 (CEK1) from Candida albicans (strain SC5314 / ATCC MYA-2876) (Yeast).